A 152-amino-acid polypeptide reads, in one-letter code: Large ribosomal subunit protein bL9 (152 aa).

The protein belongs to the bacterial ribosomal protein bL9 family.

Functionally, binds to the 23S rRNA. This is Large ribosomal subunit protein bL9 from Nostoc sp. (strain PCC 7120 / SAG 25.82 / UTEX 2576).